A 474-amino-acid polypeptide reads, in one-letter code: Trifunctional enzyme subunit beta, mitochondrial (474 aa).

A mitochondrion-targeting transit peptide spans 1–33; it reads MTILTYPFKNLPTASKWALRFSIRPLSCSSQLR. Residue lysine 72 is modified to N6-acetyllysine; alternate. Lysine 72 carries the N6-succinyllysine; alternate modification. The active-site Acyl-thioester intermediate is the cysteine 138. An intramembrane segment occupies 173–220; it reads IRHSRKMRKLMLDLNKAKSMGQRLSLISKFRFNFLAPELPAVSEFSTS. The residue at position 188 (lysine 188) is an N6-acetyllysine; alternate. N6-succinyllysine; alternate is present on lysine 188. Lysine 190, lysine 272, and lysine 291 each carry N6-succinyllysine. N6-acetyllysine; alternate is present on lysine 293. Lysine 293 carries the N6-succinyllysine; alternate modification. Lysine 298 bears the N6-acetyllysine mark. Lysine 332 carries the N6-acetyllysine; alternate modification. An N6-succinyllysine; alternate modification is found at lysine 332. N6-acetyllysine is present on residues lysine 348 and lysine 361. Cysteine 458 functions as the Proton donor/acceptor in the catalytic mechanism.

The protein belongs to the thiolase-like superfamily. Thiolase family. In terms of assembly, heterotetramer of 2 alpha/HADHA and 2 beta/HADHB subunits; forms the mitochondrial trifunctional enzyme. Also purified as higher order heterooligomers including a 4 alpha/HADHA and 4 beta/HADHB heterooligomer which physiological significance remains unclear. The mitochondrial trifunctional enzyme interacts with MTLN. Interacts with RSAD2/viperin.

Its subcellular location is the mitochondrion. It is found in the mitochondrion inner membrane. The protein localises to the mitochondrion outer membrane. It localises to the endoplasmic reticulum. It carries out the reaction an acyl-CoA + acetyl-CoA = a 3-oxoacyl-CoA + CoA. It catalyses the reaction butanoyl-CoA + acetyl-CoA = 3-oxohexanoyl-CoA + CoA. The catalysed reaction is hexanoyl-CoA + acetyl-CoA = 3-oxooctanoyl-CoA + CoA. The enzyme catalyses octanoyl-CoA + acetyl-CoA = 3-oxodecanoyl-CoA + CoA. It carries out the reaction decanoyl-CoA + acetyl-CoA = 3-oxododecanoyl-CoA + CoA. It catalyses the reaction dodecanoyl-CoA + acetyl-CoA = 3-oxotetradecanoyl-CoA + CoA. The catalysed reaction is tetradecanoyl-CoA + acetyl-CoA = 3-oxohexadecanoyl-CoA + CoA. The protein operates within lipid metabolism; fatty acid beta-oxidation. Functionally, mitochondrial trifunctional enzyme catalyzes the last three of the four reactions of the mitochondrial beta-oxidation pathway. The mitochondrial beta-oxidation pathway is the major energy-producing process in tissues and is performed through four consecutive reactions breaking down fatty acids into acetyl-CoA. Among the enzymes involved in this pathway, the trifunctional enzyme exhibits specificity for long-chain fatty acids. Mitochondrial trifunctional enzyme is a heterotetrameric complex composed of two proteins, the trifunctional enzyme subunit alpha/HADHA carries the 2,3-enoyl-CoA hydratase and the 3-hydroxyacyl-CoA dehydrogenase activities, while the trifunctional enzyme subunit beta/HADHB described here bears the 3-ketoacyl-CoA thiolase activity. The chain is Trifunctional enzyme subunit beta, mitochondrial (HADHB) from Homo sapiens (Human).